Reading from the N-terminus, the 389-residue chain is Chalcone synthase 3 (389 aa).

The active site involves Cys164.

The protein belongs to the thiolase-like superfamily. Chalcone/stilbene synthases family.

It carries out the reaction (E)-4-coumaroyl-CoA + 3 malonyl-CoA + 3 H(+) = 2',4,4',6'-tetrahydroxychalcone + 3 CO2 + 4 CoA. It functions in the pathway secondary metabolite biosynthesis; flavonoid biosynthesis. The primary product of this enzyme is 4,2',4',6'-tetrahydroxychalcone (also termed naringenin-chalcone or chalcone) which can under specific conditions spontaneously isomerize into naringenin. This is Chalcone synthase 3 (CHS3) from Trifolium subterraneum (Subterranean clover).